The sequence spans 439 residues: Chaperone SurA (439 aa).

Residues M1–A27 form the signal peptide. 2 PpiC domains span residues G180 to D281 and L293 to A391.

Its subcellular location is the periplasm. The enzyme catalyses [protein]-peptidylproline (omega=180) = [protein]-peptidylproline (omega=0). Chaperone involved in the correct folding and assembly of outer membrane proteins. Recognizes specific patterns of aromatic residues and the orientation of their side chains, which are found more frequently in integral outer membrane proteins. May act in both early periplasmic and late outer membrane-associated steps of protein maturation. The sequence is that of Chaperone SurA from Aromatoleum aromaticum (strain DSM 19018 / LMG 30748 / EbN1) (Azoarcus sp. (strain EbN1)).